The chain runs to 83 residues: Small ribosomal subunit protein bS18 (83 aa).

The interval 1-23 (MKQRNNAKRVRLEQTRRPKKNPL) is disordered.

The protein belongs to the bacterial ribosomal protein bS18 family. As to quaternary structure, part of the 30S ribosomal subunit. Forms a tight heterodimer with protein bS6.

Its function is as follows. Binds as a heterodimer with protein bS6 to the central domain of the 16S rRNA, where it helps stabilize the platform of the 30S subunit. The protein is Small ribosomal subunit protein bS18 of Corynebacterium efficiens (strain DSM 44549 / YS-314 / AJ 12310 / JCM 11189 / NBRC 100395).